A 348-amino-acid chain; its full sequence is D-erythrose-4-phosphate dehydrogenase (348 aa).

NAD(+) is bound by residues 12–13 (RI) and Arg81. Substrate is bound by residues 154–156 (SCT), Arg200, 213–214 (TK), and Arg236. Cys155 (nucleophile) is an active-site residue. Residue Asn318 coordinates NAD(+).

The protein belongs to the glyceraldehyde-3-phosphate dehydrogenase family. Epd subfamily. As to quaternary structure, homotetramer.

Its subcellular location is the cytoplasm. The enzyme catalyses D-erythrose 4-phosphate + NAD(+) + H2O = 4-phospho-D-erythronate + NADH + 2 H(+). Its pathway is cofactor biosynthesis; pyridoxine 5'-phosphate biosynthesis; pyridoxine 5'-phosphate from D-erythrose 4-phosphate: step 1/5. In terms of biological role, catalyzes the NAD-dependent conversion of D-erythrose 4-phosphate to 4-phosphoerythronate. The polypeptide is D-erythrose-4-phosphate dehydrogenase (Salmonella schwarzengrund (strain CVM19633)).